An 85-amino-acid chain; its full sequence is Conotoxin Lv15a (85 aa).

Positions 1-23 are cleaved as a signal peptide; the sequence is MEKLTVLILVATVLLMIQVLAQS. Positions 24 to 49 are excised as a propeptide; it reads GGDKHLKRRPKQYATKRLSALMRGHR. Pyrrolidone carboxylic acid is present on glutamine 50.

The protein belongs to the conotoxin O2 superfamily. Contains 4 disulfide bonds. As to expression, expressed by the venom duct.

The protein resides in the secreted. This is Conotoxin Lv15a from Conus lividus (Livid cone).